The following is a 325-amino-acid chain: Aspartate carbamoyltransferase catalytic subunit (325 aa).

Positions 55 and 56 each coordinate carbamoyl phosphate. K83 lines the L-aspartate pocket. Positions 105, 135, and 138 each coordinate carbamoyl phosphate. 2 residues coordinate L-aspartate: R176 and R230. G271 and P272 together coordinate carbamoyl phosphate.

Belongs to the aspartate/ornithine carbamoyltransferase superfamily. ATCase family. Heterododecamer (2C3:3R2) of six catalytic PyrB chains organized as two trimers (C3), and six regulatory PyrI chains organized as three dimers (R2).

It catalyses the reaction carbamoyl phosphate + L-aspartate = N-carbamoyl-L-aspartate + phosphate + H(+). The protein operates within pyrimidine metabolism; UMP biosynthesis via de novo pathway; (S)-dihydroorotate from bicarbonate: step 2/3. Functionally, catalyzes the condensation of carbamoyl phosphate and aspartate to form carbamoyl aspartate and inorganic phosphate, the committed step in the de novo pyrimidine nucleotide biosynthesis pathway. This chain is Aspartate carbamoyltransferase catalytic subunit, found in Streptomyces avermitilis (strain ATCC 31267 / DSM 46492 / JCM 5070 / NBRC 14893 / NCIMB 12804 / NRRL 8165 / MA-4680).